The chain runs to 108 residues: uncharacterized protein (108 aa).

This is an uncharacterized protein from Escherichia coli (Bacteriophage N4).